The chain runs to 252 residues: Imidazole glycerol phosphate synthase subunit HisF (252 aa).

Residues Asp-11 and Asp-130 contribute to the active site.

It belongs to the HisA/HisF family. Heterodimer of HisH and HisF.

The protein resides in the cytoplasm. It carries out the reaction 5-[(5-phospho-1-deoxy-D-ribulos-1-ylimino)methylamino]-1-(5-phospho-beta-D-ribosyl)imidazole-4-carboxamide + L-glutamine = D-erythro-1-(imidazol-4-yl)glycerol 3-phosphate + 5-amino-1-(5-phospho-beta-D-ribosyl)imidazole-4-carboxamide + L-glutamate + H(+). It functions in the pathway amino-acid biosynthesis; L-histidine biosynthesis; L-histidine from 5-phospho-alpha-D-ribose 1-diphosphate: step 5/9. Its function is as follows. IGPS catalyzes the conversion of PRFAR and glutamine to IGP, AICAR and glutamate. The HisF subunit catalyzes the cyclization activity that produces IGP and AICAR from PRFAR using the ammonia provided by the HisH subunit. This Dictyoglomus thermophilum (strain ATCC 35947 / DSM 3960 / H-6-12) protein is Imidazole glycerol phosphate synthase subunit HisF.